The primary structure comprises 84 residues: uncharacterized protein (84 aa).

The tract at residues 62 to 84 (GYATKKDTMRMSAQKRTTKRLKP) is disordered.

This is an uncharacterized protein from Soybean chlorotic mottle virus.